We begin with the raw amino-acid sequence, 194 residues long: Putative 3-methyladenine DNA glycosylase (194 aa).

It belongs to the DNA glycosylase MPG family.

The chain is Putative 3-methyladenine DNA glycosylase from Chlamydia felis (strain Fe/C-56) (Chlamydophila felis).